We begin with the raw amino-acid sequence, 795 residues long: Plakophilin-2 (795 aa).

Residues 1 to 318 (MAVPGSLAEC…MTLERAVNML (318 aa)) are required for binding to single-stranded DNA. The residue at position 44 (serine 44) is a Phosphoserine. Arginine 46 carries the omega-N-methylarginine modification. Phosphoserine is present on residues serine 82, serine 132, serine 135, serine 151, serine 154, serine 155, serine 172, serine 188, and serine 232. Disordered stretches follow at residues 197 to 233 (GTAR…SHSA) and 245 to 274 (SQAR…REPG). The span at 245–257 (SQARLQSTQSRTA) shows a compositional bias: polar residues. The span at 258–268 (RSSWPRSSVRS) shows a compositional bias: low complexity. 2 positions are modified to phosphoserine: serine 265 and serine 287. ARM repeat units lie at residues 299 to 339 (DAQL…QHES), 343 to 382 (SEAR…NLVF), 385 to 425 (NDNK…NLSS), 484 to 530 (PDGR…NLSY), 585 to 625 (PHGI…NLTA), 633 to 672 (LVAR…NLSR), 677 to 718 (QNEI…NLMQ), and 721 to 763 (YQNA…SLWA).

This sequence belongs to the beta-catenin family. Interacts with DSC2. Interacts with JUP. Interacts with KRT5/CK5, KRT8/CK8, KRT14/CK14, KRT18/CK18 and VIM. Interacts (via N-terminus) with MARK3/C-TAK1. Interacts with DSP. Interacts with DSG1, DSG2 and DSG3. Interacts (via N-terminus) with CTNNB1. Interacts with CDH1. Interacts with the RNA polymerase III (Pol III) complex proteins POLR3A/RPC155, POLR3F/RPC39 and POLR3C/RPC82. Interacts with CTNNA3. Interacts (via N-terminus) with SCN5A/Nav1.5. Interacts with ANK3/ANKG and GJA1/CX43. Expressed in cardiomyocytes in the heart (at protein level).

Its subcellular location is the nucleus. The protein resides in the cell junction. It localises to the desmosome. The protein localises to the cytoplasm. Its function is as follows. A component of desmosome cell-cell junctions which are required for positive regulation of cellular adhesion. Regulates focal adhesion turnover resulting in changes in focal adhesion size, cell adhesion and cell spreading, potentially via transcriptional modulation of beta-integrins. Required to maintain gingival epithelial barrier function. Important component of the desmosome that is also required for localization of desmosome component proteins such as DSC2, DSG2 and JUP to the desmosome cell-cell junction. Required for the formation of desmosome cell junctions in cardiomyocytes, thereby required for the correct formation of the heart, specifically trabeculation and formation of the atria walls. Loss of desmosome cell junctions leads to mis-localization of DSP and DSG2 resulting in disruption of cell-cell adhesion and disordered intermediate filaments. Modulates profibrotic gene expression in cardiomyocytes via regulation of DSP expression and subsequent activation of downstream TGFB1 and MAPK14/p38 MAPK signaling. Required for cardiac sodium current propagation and electrical synchrony in cardiac myocytes, via ANK3 stabilization and modulation of SCN5A/Nav1.5 localization to cell-cell junctions. Required for mitochondrial function, nuclear envelope integrity and positive regulation of SIRT3 transcription via maintaining DES localization at its nuclear envelope and cell tip anchoring points, and thereby preserving regulation of the transcriptional program. Maintenance of nuclear envelope integrity protects against DNA damage and transcriptional dysregulation of genes, especially those involved in the electron transport chain, thereby preserving mitochondrial function and protecting against superoxide radical anion generation. Binds single-stranded DNA (ssDNA). May regulate the localization of GJA1 to gap junctions in intercalated disks of the heart. In Mus musculus (Mouse), this protein is Plakophilin-2.